We begin with the raw amino-acid sequence, 391 residues long: Heme A synthase (391 aa).

The next 8 membrane-spanning stretches (helical) occupy residues 37-57 (IRLWLMALFLLVMAMIVVGGL), 121-141 (RQLGRVIGLVWAVGFLGFLAA), 152-172 (LLALGALGGLQGGIGWWMVAS), 186-206 (LATHLGLAFIILGLIAWQALL), 229-249 (TTVLIGVAFLQIVLGALVAGI), 298-318 (FLHRMAGYTLAALGLIFWIFG), 332-352 (LLAMALLAQILLGVGTVLSAA), and 354-374 (WQVAIAHQVGAVVIWVLILHA). Histidine 300 is a heme binding site. Histidine 360 lines the heme pocket.

This sequence belongs to the COX15/CtaA family. Type 2 subfamily. As to quaternary structure, interacts with CtaB. Heme b serves as cofactor.

Its subcellular location is the cell membrane. It catalyses the reaction Fe(II)-heme o + 2 A + H2O = Fe(II)-heme a + 2 AH2. It functions in the pathway porphyrin-containing compound metabolism; heme A biosynthesis; heme A from heme O: step 1/1. Functionally, catalyzes the conversion of heme O to heme A by two successive hydroxylations of the methyl group at C8. The first hydroxylation forms heme I, the second hydroxylation results in an unstable dihydroxymethyl group, which spontaneously dehydrates, resulting in the formyl group of heme A. The protein is Heme A synthase of Cereibacter sphaeroides (strain ATCC 17029 / ATH 2.4.9) (Rhodobacter sphaeroides).